The sequence spans 88 residues: Small ribosomal subunit protein bS20 (88 aa).

Belongs to the bacterial ribosomal protein bS20 family.

In terms of biological role, binds directly to 16S ribosomal RNA. The polypeptide is Small ribosomal subunit protein bS20 (Chelativorans sp. (strain BNC1)).